The chain runs to 277 residues: Probable endonuclease 4 (277 aa).

H70, H108, E145, D178, H181, H212, D225, H227, and E257 together coordinate Zn(2+).

This sequence belongs to the AP endonuclease 2 family. Zn(2+) serves as cofactor.

The catalysed reaction is Endonucleolytic cleavage to 5'-phosphooligonucleotide end-products.. Endonuclease IV plays a role in DNA repair. It cleaves phosphodiester bonds at apurinic or apyrimidinic (AP) sites, generating a 3'-hydroxyl group and a 5'-terminal sugar phosphate. This Mycoplasmopsis pulmonis (strain UAB CTIP) (Mycoplasma pulmonis) protein is Probable endonuclease 4.